The sequence spans 211 residues: Large ribosomal subunit protein uL3 (211 aa).

Residues 126–147 (HGQSRGPMAHGSRYHRRPGSMG) are disordered.

This sequence belongs to the universal ribosomal protein uL3 family. Part of the 50S ribosomal subunit. Forms a cluster with proteins L14 and L19.

In terms of biological role, one of the primary rRNA binding proteins, it binds directly near the 3'-end of the 23S rRNA, where it nucleates assembly of the 50S subunit. The polypeptide is Large ribosomal subunit protein uL3 (Geobacillus thermodenitrificans (strain NG80-2)).